The sequence spans 213 residues: uncharacterized protein (213 aa).

Residues S114, D162, and H194 each act as charge relay system in the active site.

This sequence belongs to the AB hydrolase superfamily. AB hydrolase 2 family.

This is an uncharacterized protein from Rickettsia bellii (strain RML369-C).